The primary structure comprises 388 residues: Acetate kinase (388 aa).

Mg(2+) is bound at residue Asn-8. Residue Lys-15 coordinates ATP. Arg-88 is a substrate binding site. The active-site Proton donor/acceptor is the Asp-144. Residues 202–206 (HLGNG), 276–278 (DMR), and 321–325 (GVGEN) each bind ATP. Residue Glu-375 coordinates Mg(2+).

This sequence belongs to the acetokinase family. As to quaternary structure, homodimer. It depends on Mg(2+) as a cofactor. Requires Mn(2+) as cofactor.

Its subcellular location is the cytoplasm. It carries out the reaction acetate + ATP = acetyl phosphate + ADP. Its pathway is metabolic intermediate biosynthesis; acetyl-CoA biosynthesis; acetyl-CoA from acetate: step 1/2. Functionally, catalyzes the formation of acetyl phosphate from acetate and ATP. Can also catalyze the reverse reaction. In Mycoplasmoides gallisepticum (strain R(low / passage 15 / clone 2)) (Mycoplasma gallisepticum), this protein is Acetate kinase.